A 490-amino-acid chain; its full sequence is Aspartyl aminopeptidase 4 (490 aa).

Residue His97 coordinates Zn(2+). Position 173 (His173) interacts with substrate. Zn(2+) is bound by residues Asp273, Glu308, Glu309, and Asp362. Glu308 is a substrate binding site. Substrate-binding residues include Asp362, His365, Lys390, and Tyr397. A Zn(2+)-binding site is contributed by His456.

It belongs to the peptidase M18 family. As to quaternary structure, tetrahedron-shaped homododecamer built from six homodimers. It depends on Zn(2+) as a cofactor.

It localises to the cytoplasm. The protein localises to the vacuole lumen. The enzyme catalyses Release of an N-terminal aspartate or glutamate from a peptide, with a preference for aspartate.. Its activity is regulated as follows. The metalloproteases inhibitors EDTA and 1.10-phenanthroline both inhibit the activity, whereas bestatin, an inhibitor of most aminopeptidases, does not affect enzyme activity. Functionally, aspartyl aminopeptidase that contributes to peptide degradation both in the cytosol and the vacuole. Cells may respond to environmental conditions by changing the distributions of the cytosolic enzyme to the vacuole when cells need more active vacuolar degradation. The sequence is that of Aspartyl aminopeptidase 4 (APE4) from Saccharomyces cerevisiae (strain ATCC 204508 / S288c) (Baker's yeast).